The primary structure comprises 40 residues: MDGETPAQKAARLAAAAAALAAKTAADAAAKAAAIAAAAA.

M1 carries the post-translational modification Blocked amino end (Met).

The protein belongs to the type-I AFP family.

In terms of biological role, antifreeze proteins lower the blood freezing point. The polypeptide is Ice-structuring protein GS-8 (Myoxocephalus aenaeus (Grubby sculpin)).